A 620-amino-acid polypeptide reads, in one-letter code: Chaperone protein HscA homolog (620 aa).

The protein belongs to the heat shock protein 70 family.

Chaperone involved in the maturation of iron-sulfur cluster-containing proteins. Has a low intrinsic ATPase activity which is markedly stimulated by HscB. This is Chaperone protein HscA homolog from Janthinobacterium sp. (strain Marseille) (Minibacterium massiliensis).